Here is a 140-residue protein sequence, read N- to C-terminus: 3-hydroxyacyl-[acyl-carrier-protein] dehydratase FabZ (140 aa).

His47 is an active-site residue.

It belongs to the thioester dehydratase family. FabZ subfamily.

It localises to the cytoplasm. It carries out the reaction a (3R)-hydroxyacyl-[ACP] = a (2E)-enoyl-[ACP] + H2O. In terms of biological role, involved in unsaturated fatty acids biosynthesis. Catalyzes the dehydration of short chain beta-hydroxyacyl-ACPs and long chain saturated and unsaturated beta-hydroxyacyl-ACPs. The sequence is that of 3-hydroxyacyl-[acyl-carrier-protein] dehydratase FabZ from Streptococcus pneumoniae serotype 2 (strain D39 / NCTC 7466).